The chain runs to 463 residues: MAVTGGGRPAARQQAARGKQMQRTFNNVKITLICGFITLLVLRGTVGINLLTYGVGGGGGSDAVAAAEEARVVEDIERILREIRSDTDDDDDDEEEEPLGVDASTTTTTNSTTTTATAARRRSSNHTYTLGPKVTRWNAKRRQWLSRNPGFPSRDARGKPRILLVTGSQPAPCDDAAGDHYLLKATKNKIDYCRIHGIEIVHSMAHLDRELAGYWAKLPLLRRLMLSHPEVEWVWWMDSDALFTDMAFELPLARYDTSNLVIHGYPELLFAKRSWIALNTGSFLLRNCQWSLELLDAWAPMGPKGRVRDEAGKVLTASLTGRPAFEADDQSALIHILLTQKERWMDKVYVEDKYFLHGFWAGLVDKYEEMMERHHPGLGDERWPFVTHFVGCKPCGGYGDYPRERCLGGMERAFNFADNQVLRLYGFRHRSLASARVRRVANRTDNPLVNKEAALKMDAKIES.

The disordered stretch occupies residues 1 to 20; the sequence is MAVTGGGRPAARQQAARGKQ. The Cytoplasmic segment spans residues 1-24; it reads MAVTGGGRPAARQQAARGKQMQRT. Low complexity predominate over residues 9 to 20; the sequence is PAARQQAARGKQ. A helical; Signal-anchor for type II membrane protein transmembrane segment spans residues 25–47; that stretch reads FNNVKITLICGFITLLVLRGTVG. Topologically, residues 48 to 463 are lumenal; the sequence is INLLTYGVGG…ALKMDAKIES (416 aa). The interval 82-125 is disordered; the sequence is EIRSDTDDDDDDEEEEPLGVDASTTTTTNSTTTTATAARRRSSN. Positions 87-99 are enriched in acidic residues; it reads TDDDDDDEEEEPL. Positions 103 to 118 are enriched in low complexity; it reads ASTTTTTNSTTTTATA. N-linked (GlcNAc...) asparagine glycosylation is found at asparagine 110, asparagine 125, and asparagine 442.

It belongs to the glycosyltransferase 34 family.

The protein localises to the golgi apparatus membrane. Functionally, probable glycosyltransferase that may be involved in the biosynthesis of xyloglucan. In Oryza sativa subsp. indica (Rice), this protein is Probable glycosyltransferase 3.